The primary structure comprises 359 residues: Peptide chain release factor 1 (359 aa).

At glutamine 233 the chain carries N5-methylglutamine.

The protein belongs to the prokaryotic/mitochondrial release factor family. In terms of processing, methylated by PrmC. Methylation increases the termination efficiency of RF1.

The protein resides in the cytoplasm. Peptide chain release factor 1 directs the termination of translation in response to the peptide chain termination codons UAG and UAA. The polypeptide is Peptide chain release factor 1 (Ruminiclostridium cellulolyticum (strain ATCC 35319 / DSM 5812 / JCM 6584 / H10) (Clostridium cellulolyticum)).